We begin with the raw amino-acid sequence, 113 residues long: U11-theraphotoxin-Hhn1k (113 aa).

The first 21 residues, 1–21 (MNTVRVTFLLVFVLAVSLGQA), serve as a signal peptide directing secretion. Positions 22 to 74 (DKDENRMEMQEKTEQGKSYLDFAENLLLQKLEELEAKLLEEDSEESRNSRQKR) are excised as a propeptide. Residues 61-83 (EEDSEESRNSRQKRCIGEGVPCD) form a disordered region. 3 disulfide bridges follow: Cys75/Cys90, Cys82/Cys95, and Cys89/Cys110.

Belongs to the neurotoxin 14 (magi-1) family. 01 (HNTX-16) subfamily. In terms of tissue distribution, expressed by the venom gland.

Its subcellular location is the secreted. Functionally, probable ion channel inhibitor. This is U11-theraphotoxin-Hhn1k from Cyriopagopus hainanus (Chinese bird spider).